The chain runs to 170 residues: Peptide deformylase (170 aa).

C93 and H135 together coordinate Fe cation. Residue E136 is part of the active site. H139 contacts Fe cation.

Belongs to the polypeptide deformylase family. Fe(2+) is required as a cofactor.

It carries out the reaction N-terminal N-formyl-L-methionyl-[peptide] + H2O = N-terminal L-methionyl-[peptide] + formate. Removes the formyl group from the N-terminal Met of newly synthesized proteins. Requires at least a dipeptide for an efficient rate of reaction. N-terminal L-methionine is a prerequisite for activity but the enzyme has broad specificity at other positions. The sequence is that of Peptide deformylase from Acidobacterium capsulatum (strain ATCC 51196 / DSM 11244 / BCRC 80197 / JCM 7670 / NBRC 15755 / NCIMB 13165 / 161).